A 373-amino-acid chain; its full sequence is Queuine tRNA-ribosyltransferase (373 aa).

D90 serves as the catalytic Proton acceptor. Residues 90-94 (DSGGF), D144, Q193, and G220 contribute to the substrate site. Positions 251–257 (GVGTPED) are RNA binding. D270 acts as the Nucleophile in catalysis. The interval 275 to 279 (TRNAR) is RNA binding; important for wobble base 34 recognition. Positions 308, 310, 313, and 339 each coordinate Zn(2+).

This sequence belongs to the queuine tRNA-ribosyltransferase family. As to quaternary structure, homodimer. Within each dimer, one monomer is responsible for RNA recognition and catalysis, while the other monomer binds to the replacement base PreQ1. Zn(2+) serves as cofactor.

The enzyme catalyses 7-aminomethyl-7-carbaguanine + guanosine(34) in tRNA = 7-aminomethyl-7-carbaguanosine(34) in tRNA + guanine. It functions in the pathway tRNA modification; tRNA-queuosine biosynthesis. Its function is as follows. Catalyzes the base-exchange of a guanine (G) residue with the queuine precursor 7-aminomethyl-7-deazaguanine (PreQ1) at position 34 (anticodon wobble position) in tRNAs with GU(N) anticodons (tRNA-Asp, -Asn, -His and -Tyr). Catalysis occurs through a double-displacement mechanism. The nucleophile active site attacks the C1' of nucleotide 34 to detach the guanine base from the RNA, forming a covalent enzyme-RNA intermediate. The proton acceptor active site deprotonates the incoming PreQ1, allowing a nucleophilic attack on the C1' of the ribose to form the product. After dissociation, two additional enzymatic reactions on the tRNA convert PreQ1 to queuine (Q), resulting in the hypermodified nucleoside queuosine (7-(((4,5-cis-dihydroxy-2-cyclopenten-1-yl)amino)methyl)-7-deazaguanosine). The protein is Queuine tRNA-ribosyltransferase of Campylobacter lari (strain RM2100 / D67 / ATCC BAA-1060).